Here is a 570-residue protein sequence, read N- to C-terminus: 15-cis-phytoene desaturase, chloroplastic/chromoplastic (570 aa).

Residues 1-91 constitute a chloroplast and chromoplast transit peptide; sequence MSIVGLVSVV…AQLSASFRSS (91 aa). FAD contacts are provided by residues 104–120, A108, 127–128, K135, 152–153, and Y158; these read GAGLAGLSTAKYLADAG, ES, and HI. Substrate is bound at residue R293. An FAD-binding site is contributed by D524. Residue A532 participates in substrate binding. M534 contributes to the FAD binding site.

This sequence belongs to the carotenoid/retinoid oxidoreductase family. In terms of assembly, homotetramer. FAD is required as a cofactor. In terms of tissue distribution, expressed more strongly in flowers than in leaves.

Its subcellular location is the plastid. It localises to the chloroplast. It is found in the chromoplast. The protein localises to the membrane. The catalysed reaction is 2 a plastoquinone + 15-cis-phytoene = 9,9',15-tri-cis-zeta-carotene + 2 a plastoquinol. It participates in carotenoid biosynthesis; lycopene biosynthesis. Converts phytoene into zeta-carotene via the intermediary of phytofluene by the symmetrical introduction of two double bonds at the C-11 and C-11' positions of phytoene with a concomitant isomerization of two neighboring double bonds at the C9 and C9' positions from trans to cis. This Narcissus pseudonarcissus (Daffodil) protein is 15-cis-phytoene desaturase, chloroplastic/chromoplastic (PDS1).